Reading from the N-terminus, the 616-residue chain is Adenylosuccinate synthetase 2 (616 aa).

The disordered stretch occupies residues 1-26; sequence MDKQAERDQSAGPVKTPQETQPPAHN. The segment covering 17-26 has biased composition (polar residues); that stretch reads PQETQPPAHN. Residues 87–93 and 117–119 contribute to the GTP site; these read GDEGKGK and GHT. Residue aspartate 88 is the Proton acceptor of the active site. Positions 88 and 117 each coordinate Mg(2+). IMP is bound by residues 88 to 91, 115 to 118, threonine 202, lysine 216, glutamine 328, threonine 343, and lysine 472; these read DEGK and NAGH. The active-site Proton donor is the histidine 118. 468-474 lines the substrate pocket; sequence AVTKKPR. GTP is bound by residues arginine 474 and 603–605; that span reads GNG.

It belongs to the adenylosuccinate synthetase family. In terms of assembly, homodimer. Requires Mg(2+) as cofactor.

It is found in the cytoplasm. The catalysed reaction is IMP + L-aspartate + GTP = N(6)-(1,2-dicarboxyethyl)-AMP + GDP + phosphate + 2 H(+). The protein operates within purine metabolism; AMP biosynthesis via de novo pathway; AMP from IMP: step 1/2. Functionally, plays an important role in the salvage pathway for purine nucleotide biosynthesis. Catalyzes the first committed step in the biosynthesis of AMP from IMP. The sequence is that of Adenylosuccinate synthetase 2 from Trypanosoma cruzi (strain CL Brener).